The primary structure comprises 263 residues: Acyl-[acyl-carrier-protein]--UDP-N-acetylglucosamine O-acyltransferase (263 aa).

This sequence belongs to the transferase hexapeptide repeat family. LpxA subfamily. In terms of assembly, homotrimer.

Its subcellular location is the cytoplasm. The catalysed reaction is a (3R)-hydroxyacyl-[ACP] + UDP-N-acetyl-alpha-D-glucosamine = a UDP-3-O-[(3R)-3-hydroxyacyl]-N-acetyl-alpha-D-glucosamine + holo-[ACP]. It participates in glycolipid biosynthesis; lipid IV(A) biosynthesis; lipid IV(A) from (3R)-3-hydroxytetradecanoyl-[acyl-carrier-protein] and UDP-N-acetyl-alpha-D-glucosamine: step 1/6. In terms of biological role, involved in the biosynthesis of lipid A, a phosphorylated glycolipid that anchors the lipopolysaccharide to the outer membrane of the cell. The polypeptide is Acyl-[acyl-carrier-protein]--UDP-N-acetylglucosamine O-acyltransferase (Xylella fastidiosa (strain Temecula1 / ATCC 700964)).